We begin with the raw amino-acid sequence, 464 residues long: Argininosuccinate lyase (464 aa).

Belongs to the lyase 1 family. Argininosuccinate lyase subfamily.

It is found in the cytoplasm. It catalyses the reaction 2-(N(omega)-L-arginino)succinate = fumarate + L-arginine. It participates in amino-acid biosynthesis; L-arginine biosynthesis; L-arginine from L-ornithine and carbamoyl phosphate: step 3/3. The protein is Argininosuccinate lyase of Pseudomonas syringae pv. syringae (strain B728a).